Reading from the N-terminus, the 98-residue chain is Large ribosomal subunit protein uL23 (98 aa).

Belongs to the universal ribosomal protein uL23 family. Part of the 50S ribosomal subunit. Contacts protein L29, and trigger factor when it is bound to the ribosome.

Functionally, one of the early assembly proteins it binds 23S rRNA. One of the proteins that surrounds the polypeptide exit tunnel on the outside of the ribosome. Forms the main docking site for trigger factor binding to the ribosome. The polypeptide is Large ribosomal subunit protein uL23 (Acidothermus cellulolyticus (strain ATCC 43068 / DSM 8971 / 11B)).